The primary structure comprises 143 residues: Large ribosomal subunit protein uL13 (143 aa).

This sequence belongs to the universal ribosomal protein uL13 family. Part of the 50S ribosomal subunit.

This protein is one of the early assembly proteins of the 50S ribosomal subunit, although it is not seen to bind rRNA by itself. It is important during the early stages of 50S assembly. In Variovorax paradoxus (strain S110), this protein is Large ribosomal subunit protein uL13.